Reading from the N-terminus, the 454-residue chain is Inactive tetrahydroanabasine acetyltransferase pauper allele (454 aa).

This sequence belongs to the plant acyltransferase family. As to quaternary structure, monomer.

This is Inactive tetrahydroanabasine acetyltransferase pauper allele from Lupinus albus (White lupine).